The primary structure comprises 301 residues: Glutamyl-Q tRNA(Asp) synthetase (301 aa).

L-glutamate contacts are provided by residues 9–13 (RFAPS) and glutamate 45. Positions 12–22 (PSPTGPLHLGS) match the 'HIGH' region motif. Residues cysteine 101, cysteine 103, tyrosine 121, and cysteine 125 each coordinate Zn(2+). Residues tyrosine 179 and arginine 197 each contribute to the L-glutamate site. The short motif at 235–239 (KLSKQ) is the 'KMSKS' region element. Lysine 238 lines the ATP pocket.

This sequence belongs to the class-I aminoacyl-tRNA synthetase family. GluQ subfamily. Requires Zn(2+) as cofactor.

Its function is as follows. Catalyzes the tRNA-independent activation of glutamate in presence of ATP and the subsequent transfer of glutamate onto a tRNA(Asp). Glutamate is transferred on the 2-amino-5-(4,5-dihydroxy-2-cyclopenten-1-yl) moiety of the queuosine in the wobble position of the QUC anticodon. The chain is Glutamyl-Q tRNA(Asp) synthetase from Thiobacillus denitrificans (strain ATCC 25259 / T1).